Here is a 105-residue protein sequence, read N- to C-terminus: Large ribosomal subunit protein eL42z/eL42y (105 aa).

The tract at residues 28 to 57 (YKKGKDSLAAQGKRRYDRKQSGYGGQTKPV) is disordered.

This sequence belongs to the eukaryotic ribosomal protein eL42 family.

This is Large ribosomal subunit protein eL42z/eL42y (RPL36AA) from Arabidopsis thaliana (Mouse-ear cress).